The chain runs to 420 residues: Glutamate dehydrogenase (420 aa).

Residue K105 is part of the active site. Residue 220–226 (GYGNAGY) coordinates NAD(+).

It belongs to the Glu/Leu/Phe/Val dehydrogenases family. As to quaternary structure, homohexamer.

The protein localises to the cytoplasm. It carries out the reaction L-glutamate + NAD(+) + H2O = 2-oxoglutarate + NH4(+) + NADH + H(+). It catalyses the reaction L-glutamate + NADP(+) + H2O = 2-oxoglutarate + NH4(+) + NADPH + H(+). The sequence is that of Glutamate dehydrogenase (gdhA) from Pyrococcus endeavori.